A 242-amino-acid polypeptide reads, in one-letter code: C-reactive protein 1.4 (242 aa).

Residues 1-24 form the signal peptide; that stretch reads MKTFHGPTFGTAVFLYLLLFLTSA. The 212-residue stretch at 30–241 folds into the Pentraxin (PTX) domain; sequence ITSKVKFPPS…GVVLSPNEIC (212 aa). Thr-60 and Tyr-63 together coordinate phosphocholine. 2 disulfide bridges follow: Cys-62–Cys-125 and Cys-112–Cys-144. Ca(2+)-binding residues include Asp-85 and Asn-86. N-linked (GlcNAc...) asparagine glycosylation is present at Asn-147. Glu-168, Gln-169, Asp-170, and Gln-180 together coordinate Ca(2+). A disulfide bridge links Cys-207 with Cys-241.

It belongs to the pentraxin family. Homopentamer. Pentraxin (or pentaxin) have a discoid arrangement of 5 non-covalently bound subunits. It depends on Ca(2+) as a cofactor.

It is found in the secreted. Functionally, might serve the role of immunoglobulins. The polypeptide is C-reactive protein 1.4 (Limulus polyphemus (Atlantic horseshoe crab)).